Here is a 212-residue protein sequence, read N- to C-terminus: Cytidylate kinase (212 aa).

An ATP-binding site is contributed by 11 to 19; it reads GPAASGKGT. The segment at 50-69 is disordered; the sequence is GGDPADPAASEEQARSLSRL.

This sequence belongs to the cytidylate kinase family. Type 1 subfamily.

The protein localises to the cytoplasm. It carries out the reaction CMP + ATP = CDP + ADP. The catalysed reaction is dCMP + ATP = dCDP + ADP. This Acidiphilium cryptum (strain JF-5) protein is Cytidylate kinase.